A 339-amino-acid polypeptide reads, in one-letter code: 7,8-didemethyl-8-hydroxy-5-deazariboflavin synthase (339 aa).

The region spanning Ile-13 to Pro-258 is the Radical SAM core domain. Positions 27, 31, and 34 each coordinate [4Fe-4S] cluster.

Belongs to the radical SAM superfamily. CofG family. As to quaternary structure, consists of two subunits, CofG and CofH. The cofactor is [4Fe-4S] cluster.

It carries out the reaction 5-amino-5-(4-hydroxybenzyl)-6-(D-ribitylimino)-5,6-dihydrouracil + S-adenosyl-L-methionine = 7,8-didemethyl-8-hydroxy-5-deazariboflavin + 5'-deoxyadenosine + L-methionine + NH4(+) + H(+). Its pathway is cofactor biosynthesis; coenzyme F0 biosynthesis. Its function is as follows. Catalyzes the radical-mediated synthesis of 7,8-didemethyl-8-hydroxy-5-deazariboflavin from 5-amino-5-(4-hydroxybenzyl)-6-(D-ribitylimino)-5,6-dihydrouracil. In Methanobrevibacter smithii (strain ATCC 35061 / DSM 861 / OCM 144 / PS), this protein is 7,8-didemethyl-8-hydroxy-5-deazariboflavin synthase.